The chain runs to 739 residues: Catalase-peroxidase 2 (739 aa).

Positions 1-26 (MKKTTIPTLSALTLAMSLAFGGAAIA) are cleaved as a signal peptide. The tryptophyl-tyrosyl-methioninium (Trp-Tyr) (with M-253) cross-link spans 105-227 (WHSAGVYRIF…MGATQMGLIY (123 aa)). Residue H106 is the Proton acceptor of the active site. A cross-link (tryptophyl-tyrosyl-methioninium (Tyr-Met) (with W-105)) is located at residues 227-253 (YVNPEGPNGVPDPLASAKEIRDTFGRM). H268 serves as a coordination point for heme b.

Belongs to the peroxidase family. Peroxidase/catalase subfamily. Homodimer or homotetramer. Heme b serves as cofactor. Formation of the three residue Trp-Tyr-Met cross-link is important for the catalase, but not the peroxidase activity of the enzyme.

It catalyses the reaction H2O2 + AH2 = A + 2 H2O. It carries out the reaction 2 H2O2 = O2 + 2 H2O. Bifunctional enzyme with both catalase and broad-spectrum peroxidase activity. The chain is Catalase-peroxidase 2 from Shewanella sp. (strain MR-4).